The primary structure comprises 505 residues: ATP synthase subunit alpha (505 aa).

ATP is bound at residue 170–177 (GDRQTGKS).

Belongs to the ATPase alpha/beta chains family. In terms of assembly, F-type ATPases have 2 components, CF(1) - the catalytic core - and CF(0) - the membrane proton channel. CF(1) has five subunits: alpha(3), beta(3), gamma(1), delta(1), epsilon(1). CF(0) has four main subunits: a(1), b(1), b'(1) and c(9-12).

Its subcellular location is the cellular thylakoid membrane. It catalyses the reaction ATP + H2O + 4 H(+)(in) = ADP + phosphate + 5 H(+)(out). Produces ATP from ADP in the presence of a proton gradient across the membrane. The alpha chain is a regulatory subunit. In Prochlorococcus marinus (strain MIT 9215), this protein is ATP synthase subunit alpha.